We begin with the raw amino-acid sequence, 101 residues long: Small ribosomal subunit protein uS10 (101 aa).

The protein belongs to the universal ribosomal protein uS10 family. As to quaternary structure, part of the 30S ribosomal subunit.

Functionally, involved in the binding of tRNA to the ribosomes. In Brachyspira hyodysenteriae (Treponema hyodysenteriae), this protein is Small ribosomal subunit protein uS10.